A 402-amino-acid polypeptide reads, in one-letter code: 3-isopropylmalate dehydratase large subunit 2 (402 aa).

The [4Fe-4S] cluster site is built by cysteine 280, cysteine 341, and cysteine 344.

This sequence belongs to the aconitase/IPM isomerase family. LeuC type 2 subfamily. Heterodimer of LeuC and LeuD. [4Fe-4S] cluster is required as a cofactor.

The catalysed reaction is (2R,3S)-3-isopropylmalate = (2S)-2-isopropylmalate. The protein operates within amino-acid biosynthesis; L-leucine biosynthesis; L-leucine from 3-methyl-2-oxobutanoate: step 2/4. In terms of biological role, catalyzes the isomerization between 2-isopropylmalate and 3-isopropylmalate, via the formation of 2-isopropylmaleate. The protein is 3-isopropylmalate dehydratase large subunit 2 of Methanopyrus kandleri (strain AV19 / DSM 6324 / JCM 9639 / NBRC 100938).